Here is a 212-residue protein sequence, read N- to C-terminus: Riboflavin synthase (212 aa).

Lumazine-binding repeat units follow at residues 1 to 97 (MFTG…VGGH) and 98 to 195 (LVSG…VDSV). Residues 4–6 (GIV), 48–50 (CLT), 62–67 (DIVEET), 101–103 (GHI), K137, 146–148 (SLT), and 160–165 (FLIPET) contribute to the 2,4-dihydroxypteridine site.

In terms of assembly, homotrimer.

It catalyses the reaction 2 6,7-dimethyl-8-(1-D-ribityl)lumazine + H(+) = 5-amino-6-(D-ribitylamino)uracil + riboflavin. It participates in cofactor biosynthesis; riboflavin biosynthesis; riboflavin from 2-hydroxy-3-oxobutyl phosphate and 5-amino-6-(D-ribitylamino)uracil: step 2/2. Catalyzes the dismutation of two molecules of 6,7-dimethyl-8-ribityllumazine, resulting in the formation of riboflavin and 5-amino-6-(D-ribitylamino)uracil. This is Riboflavin synthase (ribE) from Buchnera aphidicola subsp. Baizongia pistaciae (strain Bp).